The following is a 652-amino-acid chain: Capsid protein (652 aa).

Polar residues predominate over residues 1–11; it reads MSSNDSAQTRN. A disordered region spans residues 1–70; the sequence is MSSNDSAQTR…SSSDPPSASG (70 aa). Low complexity predominate over residues 34 to 47; sequence TNGPTTNSTSGSVG.

The protein resides in the virion. Functionally, the capsid protein self-assembles to form an icosahedral capsid with a T=2 symmetry made of 120 subunits. This Atkinsonella hypoxylon virus (isolate 2H) (AhV) protein is Capsid protein.